The chain runs to 396 residues: Lipid-A-disaccharide synthase (396 aa).

This sequence belongs to the LpxB family.

The enzyme catalyses a lipid X + a UDP-2-N,3-O-bis[(3R)-3-hydroxyacyl]-alpha-D-glucosamine = a lipid A disaccharide + UDP + H(+). The protein operates within bacterial outer membrane biogenesis; LPS lipid A biosynthesis. Condensation of UDP-2,3-diacylglucosamine and 2,3-diacylglucosamine-1-phosphate to form lipid A disaccharide, a precursor of lipid A, a phosphorylated glycolipid that anchors the lipopolysaccharide to the outer membrane of the cell. This is Lipid-A-disaccharide synthase from Acinetobacter baylyi (strain ATCC 33305 / BD413 / ADP1).